The primary structure comprises 121 residues: ATP synthase epsilon chain (121 aa).

It belongs to the ATPase epsilon chain family. In terms of assembly, F-type ATPases have 2 components, CF(1) - the catalytic core - and CF(0) - the membrane proton channel. CF(1) has five subunits: alpha(3), beta(3), gamma(1), delta(1), epsilon(1). CF(0) has three main subunits: a, b and c.

It localises to the cell membrane. Functionally, produces ATP from ADP in the presence of a proton gradient across the membrane. In Mycobacterium bovis (strain ATCC BAA-935 / AF2122/97), this protein is ATP synthase epsilon chain (atpC).